A 490-amino-acid chain; its full sequence is GTPase Der (490 aa).

2 consecutive EngA-type G domains span residues 3–166 (PVVA…AEAM) and 200–373 (IKLA…DSAT). Residues 9-16 (GRPNVGKS), 56-60 (DTGGI), 118-121 (NKVD), 206-213 (GKPNVGKS), 253-257 (DTAGV), and 318-321 (NKWD) contribute to the GTP site. The 85-residue stretch at 374–458 (RRVSTSMLTR…PIQLRFQEGG (85 aa)) folds into the KH-like domain.

The protein belongs to the TRAFAC class TrmE-Era-EngA-EngB-Septin-like GTPase superfamily. EngA (Der) GTPase family. In terms of assembly, associates with the 50S ribosomal subunit.

Functionally, GTPase that plays an essential role in the late steps of ribosome biogenesis. The chain is GTPase Der from Shewanella halifaxensis (strain HAW-EB4).